A 324-amino-acid chain; its full sequence is Transcription factor TCP24 (324 aa).

The TCP domain maps to 50–108 (GKDRHSKVLTSKGLRDRRIRLSVATAIQFYDLQDRLGFDQPSKAVEWLINAASDSITDL). 2 disordered regions span residues 122 to 215 (QNQT…PMNH) and 261 to 297 (QRSS…NHQL). The segment covering 127–142 (SACSSGTSESSLLSLS) has biased composition (low complexity). In terms of domain architecture, R spans 144–162 (TEIRGKARERARERTAKDR). The segment covering 144 to 167 (TEIRGKARERARERTAKDRDKDLQ) has biased composition (basic and acidic residues). 2 stretches are compositionally biased toward polar residues: residues 168–192 (NAHS…NWTG) and 200–212 (VQLQ…SQEP). A compositionally biased stretch (low complexity) spans 261-281 (QRSSISSSSSSSSPMDSQSIS).

Forms a heterodimeric complex with ABAP1. Interacts with SPL. In terms of tissue distribution, expressed in cotyledons, particularly in the vascular region, in leaves, roots, stems, buds, flowers and siliques.

It localises to the nucleus. Functionally, plays a pivotal role in the control of morphogenesis of shoot organs by negatively regulating the expression of boundary-specific genes such as CUC genes, probably through the induction of miRNA (e.g. miR164). In association with ABAP1, exerts a negative role in cell proliferation in leaves, possibly by inhibiting mitotic DNA replication. Participates in ovule development. This chain is Transcription factor TCP24 (TCP24), found in Arabidopsis thaliana (Mouse-ear cress).